The primary structure comprises 334 residues: L-lactate dehydrogenase B chain (334 aa).

A2 carries the post-translational modification N-acetylalanine. At K7 the chain carries N6-acetyllysine. Residues 30–58 (GQVG…LEDK) and R100 each bind NAD(+). Phosphoserine is present on S44. N6-acetyllysine is present on K58. R107 is a binding site for substrate. K119 bears the N6-acetyllysine mark. NAD(+) is bound at residue N139. 2 residues coordinate substrate: N139 and R170. H194 functions as the Proton acceptor in the catalytic mechanism. At Y240 the chain carries Phosphotyrosine. Residue T249 participates in substrate binding. At K329 the chain carries N6-acetyllysine.

This sequence belongs to the LDH/MDH superfamily. LDH family. In terms of assembly, homotetramer. Interacts with PTEN upstream reading frame protein MP31; the interaction leads to inhibition of mitochondrial lactate dehydrogenase activity, preventing conversion of lactate to pyruvate in mitochondria.

It is found in the cytoplasm. It localises to the mitochondrion inner membrane. The catalysed reaction is (S)-lactate + NAD(+) = pyruvate + NADH + H(+). Its pathway is fermentation; pyruvate fermentation to lactate; (S)-lactate from pyruvate: step 1/1. Interconverts simultaneously and stereospecifically pyruvate and lactate with concomitant interconversion of NADH and NAD(+). In Rattus norvegicus (Rat), this protein is L-lactate dehydrogenase B chain (Ldhb).